The chain runs to 359 residues: 3-dehydroquinate synthase (359 aa).

Residues 69–74, 103–107, 127–128, Lys140, and Lys149 contribute to the NAD(+) site; these read DAEDGK, GAVTD, and TT. 3 residues coordinate Zn(2+): Glu182, His244, and His260.

Belongs to the sugar phosphate cyclases superfamily. Dehydroquinate synthase family. The cofactor is NAD(+). Co(2+) is required as a cofactor. It depends on Zn(2+) as a cofactor.

It localises to the cytoplasm. It carries out the reaction 7-phospho-2-dehydro-3-deoxy-D-arabino-heptonate = 3-dehydroquinate + phosphate. It participates in metabolic intermediate biosynthesis; chorismate biosynthesis; chorismate from D-erythrose 4-phosphate and phosphoenolpyruvate: step 2/7. Functionally, catalyzes the conversion of 3-deoxy-D-arabino-heptulosonate 7-phosphate (DAHP) to dehydroquinate (DHQ). This is 3-dehydroquinate synthase from Corynebacterium pseudotuberculosis (strain C231).